The primary structure comprises 199 residues: Recombination protein RecR (199 aa).

The C4-type zinc finger occupies 57–72 (CSICGNITESDPCEIC). One can recognise a Toprim domain in the interval 80–176 (STIMVVEQPK…KVTRLAAGLA (97 aa)).

It belongs to the RecR family.

Its function is as follows. May play a role in DNA repair. It seems to be involved in an RecBC-independent recombinational process of DNA repair. It may act with RecF and RecO. The polypeptide is Recombination protein RecR (Lactobacillus johnsonii (strain CNCM I-12250 / La1 / NCC 533)).